A 155-amino-acid polypeptide reads, in one-letter code: Small ribosomal subunit protein uS9 (155 aa).

The protein belongs to the universal ribosomal protein uS9 family.

The chain is Small ribosomal subunit protein uS9 from Rhizobium etli (strain ATCC 51251 / DSM 11541 / JCM 21823 / NBRC 15573 / CFN 42).